The primary structure comprises 324 residues: MSKLRIPILLVLFIVSCCSAEQCGTQAGGALCPGGLCCSKFGWCGSTSEYCGDGCQSQCSGSSGGGTLSSLISGDTFNNMLKHRNDNACQGKPFYTYDAFLSAAKAFPNFANKGDTATKKREIAAFLGQTSHETTGGWPTAPDGPYAWGYCFLREQNPSTYCQASSEFPCASGKQYYGRGPIQISWNYNYGQCGRAIGVDLLNNPDLVATDPVISFKTALWFWMTPQSPKPSCHDVITGGWTPSSADRAAGRLPGYGTVTNIINGGLECGRGQDSRVQDRIGFYKRYCDIFGIGYGDNLDCYSQRPFGSSLPLSSILLDTVAAA.

Positions 1–20 (MSKLRIPILLVLFIVSCCSA) are cleaved as a signal peptide. The 41-residue stretch at 21-61 (EQCGTQAGGALCPGGLCCSKFGWCGSTSEYCGDGCQSQCSG) folds into the Chitin-binding type-1 domain. Intrachain disulfides connect C23–C38, C32–C44, C37–C51, and C55–C59. E133 acts as the Proton donor in catalysis. Disulfide bonds link C151–C170 and C269–C301. Positions 310–324 (SLPLSSILLDTVAAA) are cleaved as a propeptide — removed in mature form.

It belongs to the glycosyl hydrolase 19 family. Chitinase class I subfamily.

It carries out the reaction Random endo-hydrolysis of N-acetyl-beta-D-glucosaminide (1-&gt;4)-beta-linkages in chitin and chitodextrins.. In terms of biological role, defense against chitin-containing fungal pathogens. The polypeptide is Endochitinase A2 (CHI2) (Pisum sativum (Garden pea)).